Here is a 343-residue protein sequence, read N- to C-terminus: UDP-3-O-acylglucosamine N-acyltransferase (343 aa).

Catalysis depends on histidine 238, which acts as the Proton acceptor.

Belongs to the transferase hexapeptide repeat family. LpxD subfamily. As to quaternary structure, homotrimer.

It carries out the reaction a UDP-3-O-[(3R)-3-hydroxyacyl]-alpha-D-glucosamine + a (3R)-hydroxyacyl-[ACP] = a UDP-2-N,3-O-bis[(3R)-3-hydroxyacyl]-alpha-D-glucosamine + holo-[ACP] + H(+). It participates in bacterial outer membrane biogenesis; LPS lipid A biosynthesis. Functionally, catalyzes the N-acylation of UDP-3-O-acylglucosamine using 3-hydroxyacyl-ACP as the acyl donor. Is involved in the biosynthesis of lipid A, a phosphorylated glycolipid that anchors the lipopolysaccharide to the outer membrane of the cell. In Marinomonas sp. (strain MWYL1), this protein is UDP-3-O-acylglucosamine N-acyltransferase.